Consider the following 322-residue polypeptide: MQISISLQGQSKIIYQIFRSYYENAVLDLPQDIELREFAYQPFNSDTYVRHLTFSSVDELRSFILSNVPLHLYFSAARYQIPSAKEMEQKGWLGSDLLFDLDADDICEINVRRFCSGMEILSETCDGEVREISEITVDCINRVFENALVLKDILIQDFGLKPRIFFSGNRGFHIRVDCYNEWANLDSEDRREIAEYIMSPSPPYESNSESGPGWLGRFARGINGVKIDEQVTVDPKRLVRIPGSLNGKAGLKVIEIVNDKFEYDEYLSPFEGIVAFQSNLSGKFNVLGHEIQLRRGEITKLSAKTGVYLALKGYGVIKAHVR.

Residues Asp-100, Asp-102, and Asp-228 contribute to the active site.

The protein belongs to the eukaryotic-type primase small subunit family. As to quaternary structure, heterodimer of a small subunit (PriS) and a large subunit (PriL). It depends on Mg(2+) as a cofactor. The cofactor is Mn(2+).

Catalytic subunit of DNA primase, an RNA polymerase that catalyzes the synthesis of short RNA molecules used as primers for DNA polymerase during DNA replication. The small subunit contains the primase catalytic core and has DNA synthesis activity on its own. Binding to the large subunit stabilizes and modulates the activity, increasing the rate of DNA synthesis while decreasing the length of the DNA fragments, and conferring RNA synthesis capability. The DNA polymerase activity may enable DNA primase to also catalyze primer extension after primer synthesis. May also play a role in DNA repair. The chain is DNA primase small subunit PriS from Sulfolobus acidocaldarius (strain ATCC 33909 / DSM 639 / JCM 8929 / NBRC 15157 / NCIMB 11770).